Reading from the N-terminus, the 247-residue chain is Ribonuclease PH (247 aa).

Phosphate contacts are provided by residues R87 and 125–127 (GTR).

Belongs to the RNase PH family. In terms of assembly, homohexameric ring arranged as a trimer of dimers.

It catalyses the reaction tRNA(n+1) + phosphate = tRNA(n) + a ribonucleoside 5'-diphosphate. Its function is as follows. Phosphorolytic 3'-5' exoribonuclease that plays an important role in tRNA 3'-end maturation. Removes nucleotide residues following the 3'-CCA terminus of tRNAs; can also add nucleotides to the ends of RNA molecules by using nucleoside diphosphates as substrates, but this may not be physiologically important. Probably plays a role in initiation of 16S rRNA degradation (leading to ribosome degradation) during starvation. This is Ribonuclease PH from Trichormus variabilis (strain ATCC 29413 / PCC 7937) (Anabaena variabilis).